Reading from the N-terminus, the 186-residue chain is Nuclear transcription factor Y subunit C-5 (186 aa).

Residues 166 to 186 (QMPGAWTEEDATGANGGNGGN) form a disordered region.

Belongs to the NFYC/HAP5 subunit family. As to quaternary structure, heterotrimeric transcription factor composed of three components, NF-YA, NF-YB and NF-YC. NF-YB and NF-YC must interact and dimerize for NF-YA association and DNA binding. In terms of tissue distribution, expressed in inflorescences and flowers.

It is found in the nucleus. Its function is as follows. Stimulates the transcription of various genes by recognizing and binding to a CCAAT motif in promoters. The protein is Nuclear transcription factor Y subunit C-5 (NFYC5) of Arabidopsis thaliana (Mouse-ear cress).